Consider the following 373-residue polypeptide: Peptide chain release factor 1-like, mitochondrial (373 aa).

The transit peptide at 1-25 (MRSGFLSGARRLWARRAFSRTPPPS) directs the protein to the mitochondrion. Positions 56-110 (QLAAAARLLSEKERELRDTESLLHDENEDLKKLAESEIALCQKQITELKHQIISL) form a coiled coil. Residues 229-293 (PKDLRIDTKR…LRARLYSMHL (65 aa)) form a GGQ domain region. The GGQ signature appears at 243 to 245 (GGQ). The residue at position 245 (Q245) is an N5-methylglutamine.

Belongs to the prokaryotic/mitochondrial release factor family. Post-translationally, methylation of glutamine in the GGQ triplet by HEMK1 is conserved from bacteria to mammals.

It is found in the mitochondrion. Functionally, mitochondrial peptide chain release factor that directs the termination of translation in response to the peptide chain termination codons UAA and UAG. The polypeptide is Peptide chain release factor 1-like, mitochondrial (Mtrf1l) (Mus musculus (Mouse)).